Consider the following 200-residue polypeptide: NADH-quinone oxidoreductase subunit C (200 aa).

It belongs to the complex I 30 kDa subunit family. As to quaternary structure, NDH-1 is composed of 14 different subunits. Subunits NuoB, C, D, E, F, and G constitute the peripheral sector of the complex.

The protein localises to the cell inner membrane. The catalysed reaction is a quinone + NADH + 5 H(+)(in) = a quinol + NAD(+) + 4 H(+)(out). Its function is as follows. NDH-1 shuttles electrons from NADH, via FMN and iron-sulfur (Fe-S) centers, to quinones in the respiratory chain. The immediate electron acceptor for the enzyme in this species is believed to be ubiquinone. Couples the redox reaction to proton translocation (for every two electrons transferred, four hydrogen ions are translocated across the cytoplasmic membrane), and thus conserves the redox energy in a proton gradient. This is NADH-quinone oxidoreductase subunit C from Paraburkholderia phytofirmans (strain DSM 17436 / LMG 22146 / PsJN) (Burkholderia phytofirmans).